We begin with the raw amino-acid sequence, 519 residues long: Spermatocyte protein spe-8 (519 aa).

Disordered stretches follow at residues M1–V39 and N73–D97. The span at N73–K84 shows a compositional bias: polar residues. Positions N85–D97 are enriched in basic and acidic residues. In terms of domain architecture, SH2 spans F119 to C208. ATP-binding positions include V146–I154 and K184. The Protein kinase domain maps to G209–D490. The active-site Proton acceptor is the D349.

It belongs to the protein kinase superfamily. Tyr protein kinase family. Fes/fps subfamily. In terms of tissue distribution, expressed in hermaphrodite larvae but not in adult. Expressed in both male larvae and adult.

The protein resides in the cell membrane. Its subcellular location is the cytoplasm. The catalysed reaction is L-tyrosyl-[protein] + ATP = O-phospho-L-tyrosyl-[protein] + ADP + H(+). Its function is as follows. Probable non-receptor tyrosine-protein kinase which plays a role in spermatid activation (spermiogenesis) in hermaphrodites. The chain is Spermatocyte protein spe-8 from Caenorhabditis briggsae.